The chain runs to 347 residues: S-adenosylmethionine:tRNA ribosyltransferase-isomerase (347 aa).

Belongs to the QueA family. Monomer.

The protein resides in the cytoplasm. It carries out the reaction 7-aminomethyl-7-carbaguanosine(34) in tRNA + S-adenosyl-L-methionine = epoxyqueuosine(34) in tRNA + adenine + L-methionine + 2 H(+). It functions in the pathway tRNA modification; tRNA-queuosine biosynthesis. In terms of biological role, transfers and isomerizes the ribose moiety from AdoMet to the 7-aminomethyl group of 7-deazaguanine (preQ1-tRNA) to give epoxyqueuosine (oQ-tRNA). The chain is S-adenosylmethionine:tRNA ribosyltransferase-isomerase from Pseudomonas aeruginosa (strain UCBPP-PA14).